The following is a 310-amino-acid chain: HTH-type transcriptional regulator CbbR (310 aa).

The HTH lysR-type domain occupies 7 to 64; that stretch reads ITLKQLRALVAVAGSASLTGGATRLGLTPPAIHSQIRNLEEAFGVPLLHRPPETGSFT. Positions 24-43 form a DNA-binding region, H-T-H motif; the sequence is LTGGATRLGLTPPAIHSQIR.

This sequence belongs to the LysR transcriptional regulatory family.

Functionally, transcriptional activator for the cbb operon for RuBisCO and other Calvin cycle genes. This Cereibacter sphaeroides (Rhodobacter sphaeroides) protein is HTH-type transcriptional regulator CbbR (cbbR).